Reading from the N-terminus, the 230-residue chain is Ribosome biogenesis protein SLX9 homolog (230 aa).

Basic residues predominate over residues 1-11; that stretch reads MGKVRGLRARV. Disordered stretches follow at residues 1–42 and 155–187; these read MGKV…SAAG and LGLE…AQRQ. Over residues 25-38 the composition is skewed to pro residues; it reads GPAPPAPEATPPPA. Thr-34 carries the phosphothreonine modification. Positions 166–177 are enriched in basic and acidic residues; the sequence is RSRESNKPRPSE. Position 203 is a phosphoserine (Ser-203).

This sequence belongs to the SLX9 family. In terms of tissue distribution, not detected in any tested tissue.

Its subcellular location is the nucleus. The protein localises to the nucleolus. May be involved in ribosome biogenesis. This chain is Ribosome biogenesis protein SLX9 homolog, found in Homo sapiens (Human).